The sequence spans 88 residues: Small ribosomal subunit protein bS20 (88 aa).

It belongs to the bacterial ribosomal protein bS20 family.

Its function is as follows. Binds directly to 16S ribosomal RNA. This is Small ribosomal subunit protein bS20 from Bradyrhizobium diazoefficiens (strain JCM 10833 / BCRC 13528 / IAM 13628 / NBRC 14792 / USDA 110).